The following is a 151-amino-acid chain: uncharacterized protein (151 aa).

Positions 24, 27, 92, and 129 each coordinate [4Fe-4S] cluster.

Belongs to the complex I 20 kDa subunit family. [4Fe-4S] cluster serves as cofactor.

This is an uncharacterized protein from Methanocaldococcus jannaschii (strain ATCC 43067 / DSM 2661 / JAL-1 / JCM 10045 / NBRC 100440) (Methanococcus jannaschii).